The sequence spans 260 residues: Transmembrane protein 106C (260 aa).

Glycine 2 carries the N-myristoyl glycine lipid modification. A helical transmembrane segment spans residues 85–105; it reads YVLLSVLLCLLASGLVFFFLF. An N-linked (GlcNAc...) asparagine glycan is attached at asparagine 171. A helical transmembrane segment spans residues 196–216; that stretch reads SYVYFYCTLPAILVHNIVIFM.

This sequence belongs to the TMEM106 family. Interacts with TMEM106B.

It is found in the endoplasmic reticulum membrane. The protein resides in the membrane. In Rattus norvegicus (Rat), this protein is Transmembrane protein 106C (Tmem106c).